A 292-amino-acid polypeptide reads, in one-letter code: AKT-interacting protein (292 aa).

The segment at 1-64 (MNPFWNMSSA…ISPSPSVQPT (64 aa)) is disordered. A compositionally biased stretch (basic and acidic residues) spans 14 to 23 (KRSDNDEKIA). The UBC core domain occupies 75–223 (YLEYSLLAEF…VVDSVKLCNS (149 aa)). The segment at 273-292 (SWVKPGSVLPFSKEENSLQT) is disordered.

This sequence belongs to the ubiquitin-conjugating enzyme family. FTS subfamily.

Its subcellular location is the cytoplasm. The protein localises to the cell membrane. Functionally, may function to promote vesicle trafficking and/or fusion. May also regulate apoptosis. In Xenopus tropicalis (Western clawed frog), this protein is AKT-interacting protein (aktip).